Reading from the N-terminus, the 419-residue chain is L-rhamnose isomerase (419 aa).

Positions 262, 294, and 296 each coordinate Mn(2+).

The protein belongs to the rhamnose isomerase family. As to quaternary structure, homotetramer. It depends on Mn(2+) as a cofactor.

Its subcellular location is the cytoplasm. It carries out the reaction L-rhamnopyranose = L-rhamnulose. It functions in the pathway carbohydrate degradation; L-rhamnose degradation; glycerone phosphate from L-rhamnose: step 1/3. Catalyzes the interconversion of L-rhamnose and L-rhamnulose. This Shigella flexneri serotype 5b (strain 8401) protein is L-rhamnose isomerase.